Consider the following 493-residue polypeptide: Alpha-amylase-related protein (493 aa).

The first 19 residues, 1 to 19, serve as a signal peptide directing secretion; sequence MFKFALTLTLCLAGSLSLA. Gln-20 is modified (pyrrolidone carboxylic acid). An intrachain disulfide couples Cys-47 to Cys-103. Asn-117, Gln-168, and Asp-177 together coordinate Ca(2+). Cys-156 and Cys-170 are oxidised to a cystine. Arg-205 contributes to the chloride binding site. Asp-207 serves as the catalytic Nucleophile. Residue His-211 participates in Ca(2+) binding. Glu-244 functions as the Proton donor in the catalytic mechanism. Positions 307 and 342 each coordinate chloride. 3 disulfides stabilise this stretch: Cys-375–Cys-381, Cys-417–Cys-440, and Cys-447–Cys-459.

The protein belongs to the glycosyl hydrolase 13 family. In terms of assembly, monomer. Ca(2+) serves as cofactor. Chloride is required as a cofactor.

The protein resides in the secreted. The enzyme catalyses Endohydrolysis of (1-&gt;4)-alpha-D-glucosidic linkages in polysaccharides containing three or more (1-&gt;4)-alpha-linked D-glucose units.. This Drosophila simulans (Fruit fly) protein is Alpha-amylase-related protein (Amyrel).